We begin with the raw amino-acid sequence, 118 residues long: MNTYAFNRELRLLTPEHYQNVFQQAHRAGSPHFTIIARNNNLSHPRLGLAVPKKQIKTAVGRNRFKRLARESFRNTQHQLPNKDFVVIAKKSAQDLSNEELFKLFDKLWHRLSRPSRG.

It belongs to the RnpA family. In terms of assembly, consists of a catalytic RNA component (M1 or rnpB) and a protein subunit.

The catalysed reaction is Endonucleolytic cleavage of RNA, removing 5'-extranucleotides from tRNA precursor.. Its function is as follows. RNaseP catalyzes the removal of the 5'-leader sequence from pre-tRNA to produce the mature 5'-terminus. It can also cleave other RNA substrates such as 4.5S RNA. The protein component plays an auxiliary but essential role in vivo by binding to the 5'-leader sequence and broadening the substrate specificity of the ribozyme. The protein is Ribonuclease P protein component of Vibrio vulnificus (strain CMCP6).